The sequence spans 396 residues: Elongation factor Tu (396 aa).

In terms of domain architecture, tr-type G spans 10–206 (KPHVNVGTIG…ALDSYIPTPE (197 aa)). Positions 19 to 26 (GHVDHGKT) are G1. Residue 19–26 (GHVDHGKT) coordinates GTP. Position 26 (Thr26) interacts with Mg(2+). The interval 60–64 (GITIN) is G2. A G3 region spans residues 81–84 (DCPG). GTP-binding positions include 81 to 85 (DCPGH) and 136 to 139 (NKCD). The segment at 136-139 (NKCD) is G4. The interval 174–176 (SAL) is G5.

Belongs to the TRAFAC class translation factor GTPase superfamily. Classic translation factor GTPase family. EF-Tu/EF-1A subfamily. In terms of assembly, monomer.

The protein localises to the cytoplasm. The enzyme catalyses GTP + H2O = GDP + phosphate + H(+). Its function is as follows. GTP hydrolase that promotes the GTP-dependent binding of aminoacyl-tRNA to the A-site of ribosomes during protein biosynthesis. The chain is Elongation factor Tu from Azoarcus sp. (strain BH72).